The primary structure comprises 39 residues: Cecropin-D-like peptide (39 aa).

In terms of tissue distribution, hemolymph.

It localises to the secreted. Functionally, cecropins have lytic and antibacterial activity against several Gram-positive and Gram-negative bacteria. Has antibacterial activity against the Gram-positive bacteria M.luteus (MIC=34.4 uM), L.monocytogenes (MIC=34.4 uM), and S.lutea (MIC=34.4 uM), and the Gram-negative bacterium E.coli D31 (MIC=8.6 uM). Lacks antibacterial activity against the Gram-positive bacterium B.circulans, and the Gram-negative bacteria E.coli ATCC 25922 and S.typhimurium. Has antifungal activity against A.niger, but lacks antifungal activity against C.albicans, C.wickerhamii, F.oxysporum, P.pastoris, P.tannophilus, S.cerevisiae, T.harzianum, and Z.marxianus. The protein is Cecropin-D-like peptide of Galleria mellonella (Greater wax moth).